Here is a 93-residue protein sequence, read N- to C-terminus: Large ribosomal subunit protein eL42 (93 aa).

Zn(2+)-binding residues include Cys11 and Cys14. The C4-type zinc-finger motif lies at 11–75; the sequence is CPNCDEHHQL…TDLKYRCSEC (65 aa). The disordered stretch occupies residues 24 to 62; that stretch reads KVRSGRSSGMKWDARRTKRANASIGNHGRFSKVPVGNKP. The Zn(2+) site is built by Cys72 and Cys75.

Belongs to the eukaryotic ribosomal protein eL42 family. In terms of assembly, part of the 50S ribosomal subunit. Requires Zn(2+) as cofactor.

In terms of biological role, binds to the 23S rRNA. This chain is Large ribosomal subunit protein eL42, found in Halobacterium salinarum (strain ATCC 700922 / JCM 11081 / NRC-1) (Halobacterium halobium).